The following is a 202-amino-acid chain: Large ribosomal subunit protein bL25 (202 aa).

Belongs to the bacterial ribosomal protein bL25 family. CTC subfamily. In terms of assembly, part of the 50S ribosomal subunit; part of the 5S rRNA/L5/L18/L25 subcomplex. Contacts the 5S rRNA. Binds to the 5S rRNA independently of L5 and L18.

Its function is as follows. This is one of the proteins that binds to the 5S RNA in the ribosome where it forms part of the central protuberance. In Nitrosomonas eutropha (strain DSM 101675 / C91 / Nm57), this protein is Large ribosomal subunit protein bL25.